The sequence spans 305 residues: Taste receptor type 2 member 13 (305 aa).

At 1–7 (MGSSLYD) the chain is on the extracellular side. The helical transmembrane segment at 8 to 28 (ILTIVMIAEFIFGNVTNGFIV) threads the bilayer. Over 29-42 (LTNCIAWLSKRTLS) the chain is Cytoplasmic. A helical membrane pass occupies residues 43-63 (FIGWIQLFLAISRVVLIWEML). Topologically, residues 64–88 (LAWLKYMKYSFSYLAGTELRVMMLT) are extracellular. The chain crosses the membrane as a helical span at residues 89 to 109 (WVVSNHFSLWLATILSIFYLL). Over 110–128 (KIASFSRPVFLYLKWRVKK) the chain is Cytoplasmic. The chain crosses the membrane as a helical span at residues 129–149 (VLLLILLGNLIFLMFNILQIN). At 150-182 (THIEDWMDQYKRNITWDSRVNEFVGFSNLVLLE) the chain is on the extracellular side. Asparagine 162 carries an N-linked (GlcNAc...) asparagine glycan. The chain crosses the membrane as a helical span at residues 183 to 203 (MIMFSVTPFTVALVSFILLIF). Over 204–232 (SLWKHLQKMHLSSRGERDPSTKAHVNALR) the chain is Cytoplasmic. The helical transmembrane segment at 233-253 (IMVSFLLLYATYFISFFISLI) threads the bilayer. The Extracellular portion of the chain corresponds to 254–262 (PMAHKKGLD). Residues 263–283 (LMFSLTVGLFYPSSHSFILIL) traverse the membrane as a helical segment. The Cytoplasmic segment spans residues 284–305 (GHSNLRHSSCLVITYLRCKEKD).

It belongs to the G-protein coupled receptor T2R family. In terms of tissue distribution, expressed in subsets of taste receptor cells of the tongue and palate epithelium and exclusively in gustducin-positive cells. Expressed in 15% taste bud cells in circumvallate and foliate papillae but only in 2% in fungiform papillae. Expressed in the duodenum, antrum and fundus (part of the stomach).

The protein localises to the membrane. Its function is as follows. Receptor that may play a role in the perception of bitterness and is gustducin-linked. May play a role in sensing the chemical composition of the gastrointestinal content. The activity of this receptor may stimulate alpha gustducin, mediate PLC-beta-2 activation and lead to the gating of TRPM5. This chain is Taste receptor type 2 member 13 (Tas2r13), found in Rattus norvegicus (Rat).